The chain runs to 122 residues: Small ribosomal subunit protein uS13 (122 aa).

Positions 99 to 122 (RGQRTHTNARTRKGPAKAIAGKKK) are disordered.

It belongs to the universal ribosomal protein uS13 family. As to quaternary structure, part of the 30S ribosomal subunit. Forms a loose heterodimer with protein S19. Forms two bridges to the 50S subunit in the 70S ribosome.

Located at the top of the head of the 30S subunit, it contacts several helices of the 16S rRNA. In the 70S ribosome it contacts the 23S rRNA (bridge B1a) and protein L5 of the 50S subunit (bridge B1b), connecting the 2 subunits; these bridges are implicated in subunit movement. Contacts the tRNAs in the A and P-sites. This chain is Small ribosomal subunit protein uS13, found in Rhodopseudomonas palustris (strain HaA2).